A 494-amino-acid chain; its full sequence is Succinoglycan biosynthesis transport protein ExoT (494 aa).

The next 13 helical transmembrane spans lie at 16 to 36 (WSVL…PILA), 44 to 64 (FGAV…GGAG), 82 to 102 (SVFW…FVFA), 105 to 125 (LATL…SLLI), 157 to 177 (LGAV…SLLA), 215 to 235 (FGMM…MVVI), 253 to 273 (FASI…FPTF), 297 to 317 (LLAP…LVLF), 321 to 341 (WAYA…LTPC), 343 to 363 (TFIP…WALI), 384 to 404 (AMIW…WVVF), 421 to 441 (PMIA…HFGA), and 447 to 467 (VLQL…LILL).

It belongs to the polysaccharide synthase family.

The protein localises to the cell membrane. Its pathway is glycan metabolism; exopolysaccharide biosynthesis. The polypeptide is Succinoglycan biosynthesis transport protein ExoT (exoT) (Rhizobium meliloti (strain 1021) (Ensifer meliloti)).